A 121-amino-acid chain; its full sequence is Small ribosomal subunit protein uS13 (121 aa).

Residues 97-121 are disordered; sequence PVRGQKTHSNARTRKGPRASRIKKK. The segment covering 101 to 121 has biased composition (basic residues); it reads QKTHSNARTRKGPRASRIKKK.

This sequence belongs to the universal ribosomal protein uS13 family. As to quaternary structure, part of the 30S ribosomal subunit. Forms a loose heterodimer with protein S19. Forms two bridges to the 50S subunit in the 70S ribosome.

In terms of biological role, located at the top of the head of the 30S subunit, it contacts several helices of the 16S rRNA. In the 70S ribosome it contacts the 23S rRNA (bridge B1a) and protein L5 of the 50S subunit (bridge B1b), connecting the 2 subunits; these bridges are implicated in subunit movement. Contacts the tRNAs in the A and P-sites. This chain is Small ribosomal subunit protein uS13, found in Kosmotoga olearia (strain ATCC BAA-1733 / DSM 21960 / TBF 19.5.1).